Here is a 432-residue protein sequence, read N- to C-terminus: Adenosylhomocysteinase (432 aa).

Residues 1 to 24 (MSAYSPLSAQLDADTDVDVESTRT) form a disordered region. Residues Asp-137 and Glu-162 each coordinate substrate. NAD(+) is bound at residue 163–165 (TTT). Substrate contacts are provided by Lys-192 and Asp-196. NAD(+) contacts are provided by residues Asn-197, 226-231 (GYGYCG), Glu-249, Asn-284, 305-307 (AGH), and Asn-352.

This sequence belongs to the adenosylhomocysteinase family. Requires NAD(+) as cofactor.

It is found in the cytoplasm. It carries out the reaction S-adenosyl-L-homocysteine + H2O = L-homocysteine + adenosine. The protein operates within amino-acid biosynthesis; L-homocysteine biosynthesis; L-homocysteine from S-adenosyl-L-homocysteine: step 1/1. Its function is as follows. May play a key role in the regulation of the intracellular concentration of adenosylhomocysteine. The sequence is that of Adenosylhomocysteinase from Haloquadratum walsbyi (strain DSM 16854 / JCM 12705 / C23).